A 423-amino-acid polypeptide reads, in one-letter code: 5-hydroxytryptamine receptor 1A-alpha (423 aa).

Topologically, residues 1–47 (MDLRATSSNDSNATSGYSDTAAVDWDEGENATGSGSLPDPELSYQII) are extracellular. Asn9, Asn12, and Asn30 each carry an N-linked (GlcNAc...) asparagine glycan. A helical membrane pass occupies residues 48 to 68 (TSLFLGALILCSIFGNSCVVA). The Cytoplasmic portion of the chain corresponds to 69 to 82 (AIALERSLQNVANY). Residues 83–107 (LIGSLAVTDLMVSVLVLPMAALYQV) form a helical membrane-spanning segment. At 108–116 (LNKWTLGQD) the chain is on the extracellular side. The helical transmembrane segment at 117 to 141 (ICDLFIALDVLCCTSSILHLCAIAL) threads the bilayer. A disulfide bond links Cys118 and Cys196. Serotonin contacts are provided by Asp125 and Cys129. A DRY motif; important for ligand-induced conformation changes motif is present at residues 142–144 (DRY). The Cytoplasmic portion of the chain corresponds to 142-161 (DRYWAITDPIDYVNKRTPRR). Residues 162–183 (AAVLISVTWLIGFSISIPPMLG) traverse the membrane as a helical segment. The Extracellular segment spans residues 184 to 202 (WRSAEDRANPDACIISQDP). A helical membrane pass occupies residues 203–225 (GYTIYSTFGAFYIPLILMLVLYG). Topologically, residues 226–347 (RIFKAARFRI…LARERKTVKT (122 aa)) are cytoplasmic. The disordered stretch occupies residues 311–332 (LPLPNTPQSSSHENINEKTTGT). Positions 316–329 (TPQSSSHENINEKT) are enriched in polar residues. Residues Ser320, Lys346, Thr347, and Gly353 each contribute to the 1D-myo-inositol 4-phosphate site. Residues 348-371 (LGIIMGTFIFCWLPFFIVALVLPF) form a helical membrane-spanning segment. At 372–379 (CAENCYMP) the chain is on the extracellular side. The helical transmembrane segment at 380–404 (EWLGAVINWLGYSNSLLNPIIYAYF) threads the bilayer. The NPxxY motif; important for ligand-induced conformation changes and signaling motif lies at 397–401 (NPIIY). Positions 404, 405, and 406 each coordinate 1D-myo-inositol 4-phosphate. Over 405–423 (NKDFQSAFKKILRCKFHRH) the chain is Cytoplasmic.

This sequence belongs to the G-protein coupled receptor 1 family. 5-hydroxytryptamine receptor subfamily.

It is found in the cell membrane. Its activity is regulated as follows. G-protein coupled receptor activity is regulated by lipids: phosphatidylinositol 4-phosphate increases HTR1A-mediated activity. Functionally, G-protein coupled receptor for 5-hydroxytryptamine (serotonin). Also functions as a receptor for various drugs and psychoactive substances. Ligand binding causes a conformation change that triggers signaling via guanine nucleotide-binding proteins (G proteins) and modulates the activity of downstream effectors, such as adenylate cyclase. HTR1A is coupled to G(i)/G(o) G alpha proteins and mediates inhibitory neurotransmission: signaling inhibits adenylate cyclase activity and activates a phosphatidylinositol-calcium second messenger system that regulates the release of Ca(2+) ions from intracellular stores. Beta-arrestin family members regulate signaling by mediating both receptor desensitization and resensitization processes. The chain is 5-hydroxytryptamine receptor 1A-alpha (htr1aa) from Takifugu rubripes (Japanese pufferfish).